A 318-amino-acid polypeptide reads, in one-letter code: Homoserine O-succinyltransferase (318 aa).

The Acyl-thioester intermediate role is filled by C142. Substrate is bound by residues K163 and S192. H235 (proton acceptor) is an active-site residue. The active site involves E237. R249 contacts substrate.

It belongs to the MetA family.

It localises to the cytoplasm. The catalysed reaction is L-homoserine + succinyl-CoA = O-succinyl-L-homoserine + CoA. It participates in amino-acid biosynthesis; L-methionine biosynthesis via de novo pathway; O-succinyl-L-homoserine from L-homoserine: step 1/1. Transfers a succinyl group from succinyl-CoA to L-homoserine, forming succinyl-L-homoserine. The chain is Homoserine O-succinyltransferase from Shewanella putrefaciens (strain CN-32 / ATCC BAA-453).